A 49-amino-acid polypeptide reads, in one-letter code: Large ribosomal subunit protein bL33 (49 aa).

This sequence belongs to the bacterial ribosomal protein bL33 family.

In Desulforamulus reducens (strain ATCC BAA-1160 / DSM 100696 / MI-1) (Desulfotomaculum reducens), this protein is Large ribosomal subunit protein bL33.